Consider the following 153-residue polypeptide: Regulatory protein RecX (153 aa).

This sequence belongs to the RecX family.

The protein resides in the cytoplasm. Functionally, modulates RecA activity. This chain is Regulatory protein RecX, found in Vibrio vulnificus (strain CMCP6).